Here is a 466-residue protein sequence, read N- to C-terminus: Integrin-linked protein kinase homolog pat-4 (466 aa).

ANK repeat units follow at residues 50–79, 83–112, and 116–145; these read HAFSLLHWAAKGGHVAIAEMLLSRGARVNS, GDDTSLHLAAAHGHRQIVVKLLSRKADVNA, and HGMTPLHYACFWGYEQIAEDLISCGAAVNV. The Protein kinase domain maps to 210 to 465; sequence LNLITKIAES…QIIPILERMI (256 aa).

Belongs to the protein kinase superfamily. TKL Ser/Thr protein kinase family. Interacts (via protein kinase domain) with unc-112 (via N-terminus). Interacts (via ANK repeats) with unc-97 (via first LIM domain). Interacts (via protein kinase domain) with pat-6 (via C-terminus CH domain). May form a complex with unc-112, unc-97 and pat-6. Does not interact with integrin pat-3. Component of an integrin containing attachment complex, composed of at least pat-2, pat-3, pat-4, pat-6, unc-52, unc-97 and unc-112. As to expression, expressed in body wall muscle.

Its subcellular location is the cytoplasm. The protein resides in the myofibril. It is found in the sarcomere. It localises to the m line. The protein localises to the basal cell membrane. Probable pseudokinase that acts as an adapter protein. Component of an integrin containing attachment complex, which is required for muscle development and maintenance. Involved in the assembly of dense bodies and M lines during body wall muscle development by recruiting several of their components including integrin pat-3, cpna-1, unc-89 and unc-112 to integrin-mediated attachment sites. Plays a role in distal tip cell (DTC) migration and in oocyte development probably by regulating the actin cytoskeleton. During the formation of neuromuscular junctions at the larval stage, negatively regulates membrane protrusion from body wall muscles. May be involved in thermotolerance and lifespan. The protein is Integrin-linked protein kinase homolog pat-4 of Caenorhabditis elegans.